The sequence spans 539 residues: Sporozoite-associated protein (539 aa).

Residues N31, N90, N102, N149, and N167 are each glycosylated (N-linked (GlcNAc...) asparagine). The tract at residues 126–153 is disordered; sequence LTQSPPPAAAPQSPSPRAILSPRNVSKT. Residues 192–215 show a composition bias toward low complexity; sequence VVAEKSNTPTTPKTTPNGKWTGKN. A disordered region spans residues 192–231; sequence VVAEKSNTPTTPKTTPNGKWTGKNANATIETSNTDHTPPS. Residues 216–228 show a composition bias toward polar residues; it reads ANATIETSNTDHT. Residues N217, N271, and N288 are each glycosylated (N-linked (GlcNAc...) asparagine). Positions 303–355 are disordered; the sequence is TLISRAQDDKPGTKGGSDETSSSTAASNERQPMFPNDNDDDDIDQTYCPGVES. The segment covering 320-332 has biased composition (polar residues); the sequence is DETSSSTAASNER. N-linked (GlcNAc...) asparagine glycans are attached at residues N427 and N503.

In terms of tissue distribution, saliva (at protein level). Female salivary gland. Female midgut.

It is found in the secreted. In terms of biological role, binds heparan sulfate proteoglycans present on the mammalian cell surface. Modulates host immune responses at the site of inoculation via decreasing the expression of TNF-alpha/TNF, IL-1beta/IL1B, IFN-gamma/IFNG, IL4, MMP9, TGF-beta and ICAM1. (Microbial infection) Interacts with the surface of Plasmodium berghei sporozoites. Promotes Plasmodium berghei transmission to the mouse host. Does not affect Plasmodium berghei sporozoite viability. Functionally, (Microbial infection) Interacts with the surface of Plasmodium falciparum sporozoites. This chain is Sporozoite-associated protein, found in Anopheles gambiae (African malaria mosquito).